A 511-amino-acid polypeptide reads, in one-letter code: Histidine ammonia-lyase (511 aa).

Positions 144-146 form a cross-link, 5-imidazolinone (Ala-Gly); sequence ASG. Serine 145 carries the 2,3-didehydroalanine (Ser) modification.

This sequence belongs to the PAL/histidase family. Contains an active site 4-methylidene-imidazol-5-one (MIO), which is formed autocatalytically by cyclization and dehydration of residues Ala-Ser-Gly.

Its subcellular location is the cytoplasm. It catalyses the reaction L-histidine = trans-urocanate + NH4(+). Its pathway is amino-acid degradation; L-histidine degradation into L-glutamate; N-formimidoyl-L-glutamate from L-histidine: step 1/3. This is Histidine ammonia-lyase from Halalkalibacterium halodurans (strain ATCC BAA-125 / DSM 18197 / FERM 7344 / JCM 9153 / C-125) (Bacillus halodurans).